An 880-amino-acid polypeptide reads, in one-letter code: Arginine metabolism regulation protein II (880 aa).

Positions Cys21–Cys48 form a DNA-binding region, zn(2)-C6 fungal-type.

Interacts with ARG80 and MCM1.

The protein localises to the cytoplasm. It is found in the nucleus. Functionally, with ARG80, ARG82 and MCM1, coordinates the expression of arginine anabolic and catabolic genes in response to arginine. In Saccharomyces cerevisiae (strain ATCC 204508 / S288c) (Baker's yeast), this protein is Arginine metabolism regulation protein II (ARG81).